Reading from the N-terminus, the 244-residue chain is Small ribosomal subunit protein uS2 (244 aa).

The protein belongs to the universal ribosomal protein uS2 family.

This is Small ribosomal subunit protein uS2 from Hydrogenovibrio crunogenus (strain DSM 25203 / XCL-2) (Thiomicrospira crunogena).